The following is a 191-amino-acid chain: Large ribosomal subunit protein uL22 (191 aa).

Over residues 159–168 (VPKGEDDTAQ) the composition is skewed to basic and acidic residues. A disordered region spans residues 159–191 (VPKGEDDTAQKKKVSQKKLKKQKLKAALSGGAD). The span at 169-182 (KKKVSQKKLKKQKL) shows a compositional bias: basic residues.

It belongs to the universal ribosomal protein uL22 family.

The chain is Large ribosomal subunit protein uL22 (RPL17) from Suberites domuncula (Sponge).